The following is a 178-amino-acid chain: ATP synthase subunit delta (178 aa).

The protein belongs to the ATPase delta chain family. In terms of assembly, F-type ATPases have 2 components, F(1) - the catalytic core - and F(0) - the membrane proton channel. F(1) has five subunits: alpha(3), beta(3), gamma(1), delta(1), epsilon(1). F(0) has three main subunits: a(1), b(2) and c(10-14). The alpha and beta chains form an alternating ring which encloses part of the gamma chain. F(1) is attached to F(0) by a central stalk formed by the gamma and epsilon chains, while a peripheral stalk is formed by the delta and b chains.

Its subcellular location is the cell membrane. F(1)F(0) ATP synthase produces ATP from ADP in the presence of a proton or sodium gradient. F-type ATPases consist of two structural domains, F(1) containing the extramembraneous catalytic core and F(0) containing the membrane proton channel, linked together by a central stalk and a peripheral stalk. During catalysis, ATP synthesis in the catalytic domain of F(1) is coupled via a rotary mechanism of the central stalk subunits to proton translocation. In terms of biological role, this protein is part of the stalk that links CF(0) to CF(1). It either transmits conformational changes from CF(0) to CF(1) or is implicated in proton conduction. In Streptococcus pyogenes serotype M4 (strain MGAS10750), this protein is ATP synthase subunit delta.